The chain runs to 347 residues: uncharacterized protein (347 aa).

The protein belongs to the MG067/MG068/MG395 family.

This is an uncharacterized protein from Mycoplasma pneumoniae (strain ATCC 29342 / M129 / Subtype 1) (Mycoplasmoides pneumoniae).